Reading from the N-terminus, the 146-residue chain is 3-dehydroquinate dehydratase (146 aa).

Residue Tyr23 is the Proton acceptor of the active site. Residues Asn74, His80, and Asp87 each contribute to the substrate site. The Proton donor role is filled by His100. Residues 101–102 and Arg111 contribute to the substrate site; that span reads IS.

Belongs to the type-II 3-dehydroquinase family. In terms of assembly, homododecamer.

It carries out the reaction 3-dehydroquinate = 3-dehydroshikimate + H2O. It functions in the pathway metabolic intermediate biosynthesis; chorismate biosynthesis; chorismate from D-erythrose 4-phosphate and phosphoenolpyruvate: step 3/7. Catalyzes a trans-dehydration via an enolate intermediate. The chain is 3-dehydroquinate dehydratase from Bacillus cereus (strain AH820).